Here is an 88-residue protein sequence, read N- to C-terminus: Small ribosomal subunit protein bS20 (88 aa).

This sequence belongs to the bacterial ribosomal protein bS20 family.

Functionally, binds directly to 16S ribosomal RNA. The chain is Small ribosomal subunit protein bS20 from Desulforamulus reducens (strain ATCC BAA-1160 / DSM 100696 / MI-1) (Desulfotomaculum reducens).